Here is a 397-residue protein sequence, read N- to C-terminus: 2,3-bisphosphoglycerate-independent phosphoglycerate mutase (397 aa).

It belongs to the BPG-independent phosphoglycerate mutase family. A-PGAM subfamily.

It carries out the reaction (2R)-2-phosphoglycerate = (2R)-3-phosphoglycerate. The protein operates within carbohydrate degradation; glycolysis; pyruvate from D-glyceraldehyde 3-phosphate: step 3/5. In terms of biological role, catalyzes the interconversion of 2-phosphoglycerate and 3-phosphoglycerate. The chain is 2,3-bisphosphoglycerate-independent phosphoglycerate mutase from Methanosarcina acetivorans (strain ATCC 35395 / DSM 2834 / JCM 12185 / C2A).